The sequence spans 407 residues: Putative F-box protein At5g60560 (407 aa).

In terms of domain architecture, F-box spans 2 to 49 (TMMSDLSEDLVEEILCRVSITSLGAVRSTCKGWYVLSKTRVLCKAETK).

The chain is Putative F-box protein At5g60560 from Arabidopsis thaliana (Mouse-ear cress).